The sequence spans 521 residues: Outer membrane protein assembly factor BamB (521 aa).

Positions 1-19 (MKKLFLVIVPLLLSLLATS) are cleaved as a signal peptide. C20 is lipidated: N-palmitoyl cysteine. C20 carries the S-diacylglycerol cysteine lipid modification. Residues 418-521 (KSGSIESSPK…IGDFSKGDSD (104 aa)) are disordered. A compositionally biased stretch (basic and acidic residues) spans 429–444 (LPDKKVDSNKTSKNDT). Polar residues predominate over residues 445-477 (DSNPATTATSTKDIQNPANQEMINSTPVSNTST).

The protein belongs to the BamB family. Part of the Bam complex.

It is found in the cell outer membrane. In terms of biological role, part of the outer membrane protein assembly complex, which is involved in assembly and insertion of beta-barrel proteins into the outer membrane. The polypeptide is Outer membrane protein assembly factor BamB (Francisella salina).